Reading from the N-terminus, the 155-residue chain is Transcriptional repressor NrdR (155 aa).

Polar residues predominate over residues 1–11 (MECPNCHQNAS). Residues 1–22 (MECPNCHQNASRVIDSRPSDEN) form a disordered region. A zinc finger lies at 3–34 (CPNCHQNASRVIDSRPSDENRAIRRRRECENC). The 91-residue stretch at 49 to 139 (LLVVKNDGTR…IYREFKDMSS (91 aa)) folds into the ATP-cone domain.

Belongs to the NrdR family. Zn(2+) serves as cofactor.

In terms of biological role, negatively regulates transcription of bacterial ribonucleotide reductase nrd genes and operons by binding to NrdR-boxes. This is Transcriptional repressor NrdR from Lactobacillus acidophilus (strain ATCC 700396 / NCK56 / N2 / NCFM).